A 116-amino-acid polypeptide reads, in one-letter code: MSQESSVLSESQEQLANNPKIEDTSPPSANSRDNSKPVLPWDYKNKAIEIKSFSGYKVNFTGWIRRDVREERQRGSEFTASDVKGSDDKATRKKEPADEDPEVKQLEKEGEDGLDS.

Over residues 1–15 (MSQESSVLSESQEQL) the composition is skewed to low complexity. Disordered regions lie at residues 1 to 40 (MSQE…PVLP) and 70 to 116 (EERQ…GLDS). The segment covering 84 to 108 (KGSDDKATRKKEPADEDPEVKQLEK) has biased composition (basic and acidic residues).

In terms of assembly, component of the chromatin-remodeling INO80 complex, at least composed of ARP4, ARP5, ARP8, RVB1, RVB2, TAF14, NHP10, IES1, IES3, IES4, IES6, ACT1, IES2, IES5 and INO80.

The protein localises to the nucleus. The polypeptide is Ino eighty subunit 4 (IES4) (Saccharomyces cerevisiae (strain ATCC 204508 / S288c) (Baker's yeast)).